Consider the following 208-residue polypeptide: Glutathione S-transferase 1-1 (208 aa).

Residues 1–80 enclose the GST N-terminal domain; sequence MDFYYLPGSA…YLVEKYGKND (80 aa). Residues serine 9, 50-52, and 64-66 contribute to the glutathione site; these read HTI and ESR. One can recognise a GST C-terminal domain in the interval 86–207; it reads CPKKRAVINQ…EGCLEFKKFF (122 aa).

Belongs to the GST superfamily. Theta family. Homodimer.

The catalysed reaction is RX + glutathione = an S-substituted glutathione + a halide anion + H(+). Functionally, conjugation of reduced glutathione to a wide number of exogenous and endogenous hydrophobic electrophiles. This chain is Glutathione S-transferase 1-1 (GST1), found in Lucilia cuprina (Green bottle fly).